The chain runs to 129 residues: Small ribosomal subunit protein uS11c (129 aa).

Belongs to the universal ribosomal protein uS11 family. As to quaternary structure, part of the 30S ribosomal subunit.

The protein localises to the plastid. It is found in the chloroplast. The chain is Small ribosomal subunit protein uS11c from Oltmannsiellopsis viridis (Marine flagellate).